A 456-amino-acid chain; its full sequence is Phosphatidylinositol N-acetylglucosaminyltransferase gpi3 subunit (456 aa).

This sequence belongs to the glycosyltransferase group 1 family. Glycosyltransferase 4 subfamily. In terms of assembly, component of a Phosphatidylinositol N-acetylglucosaminyltransferase complex.

The catalysed reaction is a 1,2-diacyl-sn-glycero-3-phospho-(1D-myo-inositol) + UDP-N-acetyl-alpha-D-glucosamine = a 6-(N-acetyl-alpha-D-glucosaminyl)-1-(1,2-diacyl-sn-glycero-3-phospho)-1D-myo-inositol + UDP + H(+). The protein operates within glycolipid biosynthesis; glycosylphosphatidylinositol-anchor biosynthesis. Its function is as follows. Catalytic subunit in the complex catalyzing the transfer of N-acetylglucosamine from UDP-N-acetylglucosamine to phosphatidylinositol, the first step of GPI biosynthesis. The sequence is that of Phosphatidylinositol N-acetylglucosaminyltransferase gpi3 subunit (gpi3) from Schizosaccharomyces pombe (strain 972 / ATCC 24843) (Fission yeast).